The chain runs to 386 residues: CRISPR system endoribonuclease Csm6' (386 aa).

The CARF domain stretch occupies residues Met1 to Asn146. Positions Asp147 to Asn386 are HEPN domain.

Belongs to the CRISPR-associated Csm6 family. As to quaternary structure, homodimer. The composite ssRNase active site is formed at the dimer interface.

Its activity is regulated as follows. Non-specific ssRNase activity is stimulated about 1000-fold by cyclic oligoadenylate (cOA), a second messenger produced by Cas10 of the ternary Csm effector complex in the presence of a cognate target RNA. CRISPR (clustered regularly interspaced short palindromic repeat) is an adaptive immune system that provides protection against mobile genetic elements (viruses, transposable elements and conjugative plasmids). CRISPR clusters contain spacers, sequences complementary to antecedent mobile elements, and target invading nucleic acids. CRISPR clusters are transcribed and processed into CRISPR RNA (crRNA). The type III-A Csm complex binds crRNA and acts as a crRNA-guided RNase, DNase and cyclic oligoadenylate synthase; binding of target RNA cognate to the crRNA is required for all activities. In a heterologous host this Csm effector complex restricts ssRNA phage MS2, suggesting it may target RNA viruses in vivo. This protein is not part of the Csm complex. Its function is as follows. Csm functions as a non-specific ssDNase. Base-pairing between crRNA and target RNA to form a ternary Csm complex activates a ssDNase activity; target RNA cleavage suppresses the ssDNase, a temporal control that prevents uncontrolled DNA degradation. Viral RNA transcripts probably tether the Csm complex to the viral genome, recruiting Cas10 ssDNA activity which is able to degrade DNA in the transcription bubble, spatially controlling the DNase activity. Functionally, a single-strand-specific endoribonuclease (ssRNase) that is approximately 1000-fold stimulated by cyclic oligoadenylate (cOA); although several species of cOA are synthesized by this organism only cyclic hexaadenylate (cA6) stimulates the ssRNase activity. Cleaves preferentially within GA or AA dinucleotides, although the presence of cA6 broadens the preference. The sequence is that of CRISPR system endoribonuclease Csm6' from Streptococcus thermophilus.